The following is a 352-amino-acid chain: Cyclin-dependent kinase-like 1 (352 aa).

The region spanning 4–287 (YEKIGKIGEG…CEQLLQHPYF (284 aa)) is the Protein kinase domain. Residues 10–18 (IGEGSYGVV) and lysine 33 each bind ATP. The [NKR]KIAxRE motif lies at 45–51 (KKIALRE). Aspartate 126 serves as the catalytic Proton acceptor.

The protein belongs to the protein kinase superfamily. CMGC Ser/Thr protein kinase family. CDC2/CDKX subfamily.

It localises to the cytoplasm. Its subcellular location is the nucleus. The enzyme catalyses L-seryl-[protein] + ATP = O-phospho-L-seryl-[protein] + ADP + H(+). It catalyses the reaction L-threonyl-[protein] + ATP = O-phospho-L-threonyl-[protein] + ADP + H(+). This chain is Cyclin-dependent kinase-like 1, found in Rattus norvegicus (Rat).